The sequence spans 507 residues: Cytochrome P450 monooxygenase ptmU (507 aa).

A helical membrane pass occupies residues 4 to 24 (VNAWWVGGSLLLGIWAIVVFF). Residues N98, N202, and N398 are each glycosylated (N-linked (GlcNAc...) asparagine). Heme is bound at residue C444.

It belongs to the cytochrome P450 family. The cofactor is heme.

It localises to the membrane. Its pathway is secondary metabolite biosynthesis. In terms of biological role, cytochrome P450 monooxygenase; part of the gene cluster that mediates the biosynthesis of the indole diterpenes penitrems. The geranylgeranyl diphosphate (GGPP) synthase ptmG catalyzes the first step in penitrem biosynthesis via conversion of farnesyl pyrophosphate and isopentyl pyrophosphate into geranylgeranyl pyrophosphate (GGPP). Condensation of indole-3-glycerol phosphate with GGPP by the prenyl transferase ptmC then forms 3-geranylgeranylindole (3-GGI). Epoxidation by the FAD-dependent monooxygenase ptmM leads to a epoxidized-GGI that is substrate of the terpene cyclase ptmB for cyclization to yield paspaline. Paspaline is subsequently converted to 13-desoxypaxilline by the cytochrome P450 monooxygenase ptmP, the latter being then converted to paxilline by the cytochrome P450 monooxygenase ptmQ. Paxilline is converted to beta-paxitriol via C-10 ketoreduction by the short-chain dehydrogenase ptmH which can be monoprenylated at the C-20 by the indole diterpene prenyltransferase ptmD. A two-step elimination (acetylation and elimination) process performed by the O-acetyltransferase ptmV and ptmI leads to the production of the prenylated form of penijanthine. The FAD-linked oxidoreductase ptmO then converts the prenylated form of penijanthine into PC-M5 which is in turn transformed into PC-M4 by the aromatic dimethylallyltransferase ptmE. Five sequential oxidative transformations performed by the cytochrome P450 monooxygenases ptmK, ptmU, ptmL, ptmN and ptmJ yield the various penitrem compounds. PtmK, ptmU and ptmM are involved in the formation of the key bicyclic ring of penitrem C via the formation of the intermediates secopenitrem D and penitrem D. PtmL catalyzes the epoxidation of penitrem D and C to yield penitrem B and F, respectively. PtmJ catalyzes the last benzylic hydroxylation to convert penitrem B to prenitrem E and penitrem F to penitrem A. This is Cytochrome P450 monooxygenase ptmU from Penicillium ochrochloron.